Reading from the N-terminus, the 97-residue chain is RNA-binding protein Hfq (97 aa).

Residues 10–70 (DPFLNALRKE…ISTIVPARSV (61 aa)) form the Sm domain. Residues 75-97 (ENRPQAAPASTLVQVETVQQPAE) are disordered. The segment covering 85–97 (TLVQVETVQQPAE) has biased composition (polar residues).

This sequence belongs to the Hfq family. As to quaternary structure, homohexamer.

Functionally, RNA chaperone that binds small regulatory RNA (sRNAs) and mRNAs to facilitate mRNA translational regulation in response to envelope stress, environmental stress and changes in metabolite concentrations. Also binds with high specificity to tRNAs. In Neisseria meningitidis serogroup C / serotype 2a (strain ATCC 700532 / DSM 15464 / FAM18), this protein is RNA-binding protein Hfq.